Here is a 102-residue protein sequence, read N- to C-terminus: Small ribosomal subunit protein uS10 (102 aa).

Belongs to the universal ribosomal protein uS10 family. As to quaternary structure, part of the 30S ribosomal subunit.

Involved in the binding of tRNA to the ribosomes. This is Small ribosomal subunit protein uS10 from Bifidobacterium longum (strain DJO10A).